We begin with the raw amino-acid sequence, 363 residues long: Phospho-N-acetylmuramoyl-pentapeptide-transferase (363 aa).

11 helical membrane passes run 27–47 (AGAACLTALAISLLLGNPLIA), 76–96 (TMGGVLILAALFGSTLLWADL), 97–117 (TDGYVWAVLLTTLSFGAVGFA), 137–157 (LGCEFAASLVGGYWMQSLMPA), 171–191 (WLLPLGFAFPLFAMITITGFG), 202–222 (GLAIVPVIIAALVFGLISYLV), 226–246 (VFADYLQLHAVPGTGELCVFC), 248–268 (ALVGAGLGFLWFNAPPAAVFM), 271–291 (TGSLSLGGALGAIAVAVKHEL), 292–312 (VLCIVGGLFVVETLSVIIQVF), and 340–360 (KIVIRFWIVSIVLGLCGLATL).

This sequence belongs to the glycosyltransferase 4 family. MraY subfamily. Mg(2+) is required as a cofactor.

It is found in the cell inner membrane. The enzyme catalyses UDP-N-acetyl-alpha-D-muramoyl-L-alanyl-gamma-D-glutamyl-meso-2,6-diaminopimeloyl-D-alanyl-D-alanine + di-trans,octa-cis-undecaprenyl phosphate = di-trans,octa-cis-undecaprenyl diphospho-N-acetyl-alpha-D-muramoyl-L-alanyl-D-glutamyl-meso-2,6-diaminopimeloyl-D-alanyl-D-alanine + UMP. It participates in cell wall biogenesis; peptidoglycan biosynthesis. Its function is as follows. Catalyzes the initial step of the lipid cycle reactions in the biosynthesis of the cell wall peptidoglycan: transfers peptidoglycan precursor phospho-MurNAc-pentapeptide from UDP-MurNAc-pentapeptide onto the lipid carrier undecaprenyl phosphate, yielding undecaprenyl-pyrophosphoryl-MurNAc-pentapeptide, known as lipid I. The chain is Phospho-N-acetylmuramoyl-pentapeptide-transferase from Gluconacetobacter diazotrophicus (strain ATCC 49037 / DSM 5601 / CCUG 37298 / CIP 103539 / LMG 7603 / PAl5).